The primary structure comprises 407 residues: Peptidase T (407 aa).

Residue His77 participates in Zn(2+) binding. Residue Asp79 is part of the active site. Asp140 contacts Zn(2+). Glu174 serves as the catalytic Proton acceptor. Residues Glu175, Asp197, and His379 each coordinate Zn(2+).

Belongs to the peptidase M20B family. Zn(2+) serves as cofactor.

It is found in the cytoplasm. The catalysed reaction is Release of the N-terminal residue from a tripeptide.. Its function is as follows. Cleaves the N-terminal amino acid of tripeptides. The polypeptide is Peptidase T (Bacteroides fragilis (strain YCH46)).